A 188-amino-acid polypeptide reads, in one-letter code: ATP synthase subunit delta (188 aa).

The protein belongs to the ATPase delta chain family. F-type ATPases have 2 components, F(1) - the catalytic core - and F(0) - the membrane proton channel. F(1) has five subunits: alpha(3), beta(3), gamma(1), delta(1), epsilon(1). F(0) has three main subunits: a(1), b(2) and c(10-14). The alpha and beta chains form an alternating ring which encloses part of the gamma chain. F(1) is attached to F(0) by a central stalk formed by the gamma and epsilon chains, while a peripheral stalk is formed by the delta and b chains.

The protein localises to the cell inner membrane. F(1)F(0) ATP synthase produces ATP from ADP in the presence of a proton or sodium gradient. F-type ATPases consist of two structural domains, F(1) containing the extramembraneous catalytic core and F(0) containing the membrane proton channel, linked together by a central stalk and a peripheral stalk. During catalysis, ATP synthesis in the catalytic domain of F(1) is coupled via a rotary mechanism of the central stalk subunits to proton translocation. Functionally, this protein is part of the stalk that links CF(0) to CF(1). It either transmits conformational changes from CF(0) to CF(1) or is implicated in proton conduction. The protein is ATP synthase subunit delta of Rhizobium leguminosarum bv. trifolii (strain WSM2304).